The sequence spans 178 residues: Protein FLOWERING LOCUS T 1 (178 aa).

It belongs to the phosphatidylethanolamine-binding protein family. Expressed in leaves but not in shoot apex.

Involved in the regulation of vernalization and of flowering time. The polypeptide is Protein FLOWERING LOCUS T 1 (Brachypodium distachyon (Purple false brome)).